A 401-amino-acid polypeptide reads, in one-letter code: Probable tRNA sulfurtransferase (401 aa).

The 106-residue stretch at 60–165 (EEICSLLKNI…EEATFLTIRN (106 aa)) folds into the THUMP domain. Residues 183–184 (ML), 208–209 (HF), R265, G287, and Q296 contribute to the ATP site.

This sequence belongs to the ThiI family.

Its subcellular location is the cytoplasm. The enzyme catalyses [ThiI sulfur-carrier protein]-S-sulfanyl-L-cysteine + a uridine in tRNA + 2 reduced [2Fe-2S]-[ferredoxin] + ATP + H(+) = [ThiI sulfur-carrier protein]-L-cysteine + a 4-thiouridine in tRNA + 2 oxidized [2Fe-2S]-[ferredoxin] + AMP + diphosphate. It catalyses the reaction [ThiS sulfur-carrier protein]-C-terminal Gly-Gly-AMP + S-sulfanyl-L-cysteinyl-[cysteine desulfurase] + AH2 = [ThiS sulfur-carrier protein]-C-terminal-Gly-aminoethanethioate + L-cysteinyl-[cysteine desulfurase] + A + AMP + 2 H(+). It participates in cofactor biosynthesis; thiamine diphosphate biosynthesis. Functionally, catalyzes the ATP-dependent transfer of a sulfur to tRNA to produce 4-thiouridine in position 8 of tRNAs, which functions as a near-UV photosensor. Also catalyzes the transfer of sulfur to the sulfur carrier protein ThiS, forming ThiS-thiocarboxylate. This is a step in the synthesis of thiazole, in the thiamine biosynthesis pathway. The sulfur is donated as persulfide by IscS. This is Probable tRNA sulfurtransferase from Bacillus velezensis (strain DSM 23117 / BGSC 10A6 / LMG 26770 / FZB42) (Bacillus amyloliquefaciens subsp. plantarum).